A 145-amino-acid polypeptide reads, in one-letter code: Ribosome maturation factor RimP (145 aa).

Belongs to the RimP family.

It localises to the cytoplasm. Functionally, required for maturation of 30S ribosomal subunits. The polypeptide is Ribosome maturation factor RimP (Azotobacter vinelandii (strain DJ / ATCC BAA-1303)).